A 352-amino-acid chain; its full sequence is Nicotinate-nucleotide--dimethylbenzimidazole phosphoribosyltransferase (352 aa).

Glu-318 functions as the Proton acceptor in the catalytic mechanism.

The protein belongs to the CobT family.

It catalyses the reaction 5,6-dimethylbenzimidazole + nicotinate beta-D-ribonucleotide = alpha-ribazole 5'-phosphate + nicotinate + H(+). Its pathway is nucleoside biosynthesis; alpha-ribazole biosynthesis; alpha-ribazole from 5,6-dimethylbenzimidazole: step 1/2. Its function is as follows. Catalyzes the synthesis of alpha-ribazole-5'-phosphate from nicotinate mononucleotide (NAMN) and 5,6-dimethylbenzimidazole (DMB). The protein is Nicotinate-nucleotide--dimethylbenzimidazole phosphoribosyltransferase of Geotalea uraniireducens (strain Rf4) (Geobacter uraniireducens).